A 259-amino-acid chain; its full sequence is Ribonuclease HII (259 aa).

Positions 1–26 (MLSTPPKLPSAHGPVHFPRRSGTGMN) are disordered. The 189-residue stretch at 55–243 (APVAGADEAG…VRAQQLVLFE (189 aa)) folds into the RNase H type-2 domain. Residues aspartate 61, glutamate 62, and aspartate 152 each contribute to the a divalent metal cation site.

It belongs to the RNase HII family. Requires Mn(2+) as cofactor. Mg(2+) is required as a cofactor.

The protein resides in the cytoplasm. It carries out the reaction Endonucleolytic cleavage to 5'-phosphomonoester.. Functionally, endonuclease that specifically degrades the RNA of RNA-DNA hybrids. The chain is Ribonuclease HII from Azorhizobium caulinodans (strain ATCC 43989 / DSM 5975 / JCM 20966 / LMG 6465 / NBRC 14845 / NCIMB 13405 / ORS 571).